The following is a 133-amino-acid chain: Small ribosomal subunit protein uS9 (133 aa).

Positions 97 to 113 (SKQELKSHGFLTRDPRK) are enriched in basic and acidic residues. The interval 97 to 133 (SKQELKSHGFLTRDPRKKERKKYGHKKARKSFQFSKR) is disordered. The span at 114–133 (KERKKYGHKKARKSFQFSKR) shows a compositional bias: basic residues.

This sequence belongs to the universal ribosomal protein uS9 family.

The protein is Small ribosomal subunit protein uS9 of Chlamydia abortus (strain DSM 27085 / S26/3) (Chlamydophila abortus).